The following is a 560-amino-acid chain: Clathrin interactor EPSIN 1 (560 aa).

In terms of domain architecture, ENTH spans 20 to 152; sequence LKVLKVPEME…NNKEKISEIR (133 aa). Residues 190-288 are disordered; that stretch reads NFDSYKDRDS…KPSTGSANQV (99 aa). The span at 193 to 220 shows a compositional bias: basic and acidic residues; sequence SYKDRDSREDKNDYESFQKSRRGVKTEE. Positions 221 to 233 are enriched in polar residues; sequence QSYTSKKSFSRYG. A compositionally biased stretch (basic and acidic residues) spans 234 to 251; it reads STDHDNLSSGKKSPDSAK. The span at 274 to 287 shows a compositional bias: polar residues; the sequence is GTSSNKPSTGSANQ. The Clathrin binding signature appears at 296–300; sequence IGDFL. The short motif at 320–322 is the ALPHA-ADR binding element; it reads DLF. Positions 414–439 are enriched in polar residues; the sequence is SHSASVSTGPQAPSVHGSATNTTSPL. 2 disordered regions span residues 414-453 and 517-560; these read SHSASVSTGPQAPSVHGSATNTTSPLSFADSKPQHLQKKD and LGKT…GFKQ. Over residues 526-536 the composition is skewed to low complexity; it reads QQQQQQQQQQQ. Residues 544 to 554 show a composition bias toward polar residues; that stretch reads FFSSLSNQRYQ.

This sequence belongs to the epsin family. As to quaternary structure, interacts with clathrin, VTI11, GAMMA-ADR and VSR1. Binds to the deubiquitinating enzyme AMSH3. As to expression, mostly expressed in cotyledons and flowers, and, to a lower extent, in roots, leaves and siliques (at protein level).

It is found in the golgi apparatus. The protein localises to the prevacuolar compartment. Its subcellular location is the cytoplasm. It localises to the cytoplasmic vesicle. The protein resides in the clathrin-coated vesicle. It is found in the cytoskeleton. May have a role in transport via clathrin-coated vesicles from the trans-Golgi network to endosomes. Stimulates clathrin assembly. Does not seem to bind to phospholipids. Plays an important role in the vacuolar trafficking of soluble cargo proteins at the trans-Golgi network. This chain is Clathrin interactor EPSIN 1 (EPSIN1), found in Arabidopsis thaliana (Mouse-ear cress).